The sequence spans 436 residues: Sarcosine reductase complex component B subunit beta (436 aa).

Selenocysteine 350 is an active-site residue. Selenocysteine 350 is a non-standard amino acid (selenocysteine).

Belongs to the GrdB/GrdF/GrdH family. Heterotetramer of two alpha and two beta subunits. Component of the sarcosine reductase complex, together with components A and C. PB is substrate specific.

It carries out the reaction acetyl phosphate + methylamine + [thioredoxin]-disulfide + H2O = sarcosine + [thioredoxin]-dithiol + phosphate + H(+). Functionally, in the first step of sarcosine reductase, the substrate is bound to component PB via a Schiff base intermediate. Then the PB-activated substrate is nucleophilically attacked by the selenol anion of component PA to transform it to a carboxymethylated selenoether and the respective amine. By action of component PC, acetyl phosphate is formed, leaving component PA in its oxidized state. Finally component PA becomes reduced by the thioredoxin system to start a new catalytic cycle of reductive deamination. In Peptoclostridium acidaminophilum (Eubacterium acidaminophilum), this protein is Sarcosine reductase complex component B subunit beta (grdF).